Here is a 310-residue protein sequence, read N- to C-terminus: uncharacterized protein (310 aa).

Positions Phe-5–Thr-62 constitute an HTH lysR-type domain. Residues Phe-22–Arg-42 constitute a DNA-binding region (H-T-H motif).

This sequence belongs to the LysR transcriptional regulatory family.

This is an uncharacterized protein from Escherichia coli (strain K12).